The chain runs to 538 residues: RNA-binding protein RO60 (538 aa).

Residues 16 to 369 (VPNSEGCYVW…SFKLVEPTGK (354 aa)) form the TROVE domain. The interval 120–284 (RIPTHLFTFI…DMPLTALLRN (165 aa)) is RNA-binding. Residues 361–538 (FKLVEPTGKR…VIRNFTLDLI (178 aa)) form a VWFA-like domain region. A divalent metal cation-binding residues include Ser378, Ser380, and Thr445.

The protein belongs to the Ro 60 kDa family.

The protein localises to the cytoplasm. Its function is as follows. RNA-binding protein that binds to misfolded non-coding RNAs, pre-5S rRNA, and several small cytoplasmic RNA molecules known as Y RNAs. May play roles in cilia formation and/or maintenance. The protein is RNA-binding protein RO60 of Xenopus laevis (African clawed frog).